Reading from the N-terminus, the 436-residue chain is Probable cinnamyl alcohol dehydrogenase 8B (436 aa).

Cys-120 is a binding site for Zn(2+). Thr-122 serves as a coordination point for NADP(+). Positions 142, 143, 173, 176, 179, 187, and 236 each coordinate Zn(2+). Residues Thr-240, 261–266 (GLGGLG), 284–289 (STSPGK), Thr-324, Gly-348, and 371–373 (NCV) each bind NADP(+).

It belongs to the zinc-containing alcohol dehydrogenase family. In terms of assembly, homodimer. Requires Zn(2+) as cofactor.

The catalysed reaction is (E)-cinnamyl alcohol + NADP(+) = (E)-cinnamaldehyde + NADPH + H(+). It catalyses the reaction (E)-coniferol + NADP(+) = (E)-coniferaldehyde + NADPH + H(+). It carries out the reaction (E)-sinapyl alcohol + NADP(+) = (E)-sinapaldehyde + NADPH + H(+). The enzyme catalyses (E)-4-coumaroyl alcohol + NADP(+) = (E)-4-coumaraldehyde + NADPH + H(+). The catalysed reaction is (E)-caffeyl alcohol + NADP(+) = (E)-caffeyl aldehyde + NADPH + H(+). It participates in aromatic compound metabolism; phenylpropanoid biosynthesis. In terms of biological role, involved in lignin biosynthesis. Catalyzes the final step specific for the production of lignin monomers. Catalyzes the NADPH-dependent reduction of coniferaldehyde, 5-hydroxyconiferaldehyde, sinapaldehyde, 4-coumaraldehyde and caffeyl aldehyde to their respective alcohols. This chain is Probable cinnamyl alcohol dehydrogenase 8B, found in Oryza sativa subsp. japonica (Rice).